We begin with the raw amino-acid sequence, 969 residues long: RNA polymerase-associated protein RapA (969 aa).

The Helicase ATP-binding domain occupies 162–339; sequence EVGQRVAPRV…FARLALLDAD (178 aa). Residue 175–182 coordinates ATP; that stretch reads DEVGLGKT. A DEAH box motif is present at residues 285–288; that stretch reads DEAH. The region spanning 492–663 is the Helicase C-terminal domain; the sequence is RIEWLITFLK…IFLKNPQAVG (172 aa).

It belongs to the SNF2/RAD54 helicase family. RapA subfamily. As to quaternary structure, interacts with the RNAP. Has a higher affinity for the core RNAP than for the holoenzyme. Its ATPase activity is stimulated by binding to RNAP.

Its function is as follows. Transcription regulator that activates transcription by stimulating RNA polymerase (RNAP) recycling in case of stress conditions such as supercoiled DNA or high salt concentrations. Probably acts by releasing the RNAP, when it is trapped or immobilized on tightly supercoiled DNA. Does not activate transcription on linear DNA. Probably not involved in DNA repair. This Actinobacillus pleuropneumoniae serotype 3 (strain JL03) protein is RNA polymerase-associated protein RapA.